Here is a 249-residue protein sequence, read N- to C-terminus: Eukaryotic translation initiation factor 3 subunit K (249 aa).

The region spanning 46-222 is the PCI domain; it reads FDCYANLALL…VKVPSNKENE (177 aa).

This sequence belongs to the eIF-3 subunit K family. In terms of assembly, component of the eukaryotic translation initiation factor 3 (eIF-3) complex.

Its subcellular location is the cytoplasm. Component of the eukaryotic translation initiation factor 3 (eIF-3) complex, which is involved in protein synthesis of a specialized repertoire of mRNAs and, together with other initiation factors, stimulates binding of mRNA and methionyl-tRNAi to the 40S ribosome. The eIF-3 complex specifically targets and initiates translation of a subset of mRNAs involved in cell proliferation. The polypeptide is Eukaryotic translation initiation factor 3 subunit K (Aspergillus clavatus (strain ATCC 1007 / CBS 513.65 / DSM 816 / NCTC 3887 / NRRL 1 / QM 1276 / 107)).